Reading from the N-terminus, the 388-residue chain is Putative nickel insertion protein (388 aa).

The protein belongs to the LarC family.

This is Putative nickel insertion protein from Syntrophobacter fumaroxidans (strain DSM 10017 / MPOB).